A 213-amino-acid polypeptide reads, in one-letter code: 3-isopropylmalate dehydratase small subunit (213 aa).

The protein belongs to the LeuD family. LeuD type 1 subfamily. Heterodimer of LeuC and LeuD.

It catalyses the reaction (2R,3S)-3-isopropylmalate = (2S)-2-isopropylmalate. It functions in the pathway amino-acid biosynthesis; L-leucine biosynthesis; L-leucine from 3-methyl-2-oxobutanoate: step 2/4. Its function is as follows. Catalyzes the isomerization between 2-isopropylmalate and 3-isopropylmalate, via the formation of 2-isopropylmaleate. This Neisseria meningitidis serogroup A / serotype 4A (strain DSM 15465 / Z2491) protein is 3-isopropylmalate dehydratase small subunit.